The sequence spans 149 residues: Nucleoside diphosphate kinase (149 aa).

ATP-binding residues include Lys9, Phe57, Arg85, Thr91, Arg102, and Asn112. Residue His115 is the Pros-phosphohistidine intermediate of the active site.

This sequence belongs to the NDK family. Homotetramer. The cofactor is Mg(2+).

Its subcellular location is the cytoplasm. The enzyme catalyses a 2'-deoxyribonucleoside 5'-diphosphate + ATP = a 2'-deoxyribonucleoside 5'-triphosphate + ADP. It catalyses the reaction a ribonucleoside 5'-diphosphate + ATP = a ribonucleoside 5'-triphosphate + ADP. Major role in the synthesis of nucleoside triphosphates other than ATP. The ATP gamma phosphate is transferred to the NDP beta phosphate via a ping-pong mechanism, using a phosphorylated active-site intermediate. This Staphylococcus epidermidis (strain ATCC 35984 / DSM 28319 / BCRC 17069 / CCUG 31568 / BM 3577 / RP62A) protein is Nucleoside diphosphate kinase.